The sequence spans 379 residues: Cytochrome b (379 aa).

The next 4 membrane-spanning stretches (helical) occupy residues 33-53 (FGSL…FLAM), 77-98 (WLIR…YLHI), 113-133 (WNIG…GYVL), and 178-198 (FFTF…LHLL). Residues histidine 83 and histidine 97 each coordinate heme b. Heme b contacts are provided by histidine 182 and histidine 196. Residue histidine 201 coordinates a ubiquinone. The next 4 membrane-spanning stretches (helical) occupy residues 226–246 (YKDL…VLFS), 288–308 (LGGV…PLLH), 320–340 (FSQT…WIGG), and 347–367 (FIII…VVMP).

This sequence belongs to the cytochrome b family. As to quaternary structure, the cytochrome bc1 complex contains 3 respiratory subunits (MT-CYB, CYC1 and UQCRFS1), 2 core proteins (UQCRC1 and UQCRC2) and probably 6 low-molecular weight proteins. The cofactor is heme b.

The protein resides in the mitochondrion inner membrane. Its function is as follows. Component of the ubiquinol-cytochrome c reductase complex (complex III or cytochrome b-c1 complex) that is part of the mitochondrial respiratory chain. The b-c1 complex mediates electron transfer from ubiquinol to cytochrome c. Contributes to the generation of a proton gradient across the mitochondrial membrane that is then used for ATP synthesis. This chain is Cytochrome b (MT-CYB), found in Iguana iguana (Common iguana).